The chain runs to 504 residues: MAPKLDIILHPPENGEFYSSDDLISGTIVLDLTKSLSIKQIKVGLKGFTETTTKMDSEYVFPQNGMLGPATENKSYHNLVREERRVFPPDNVWDALEGSSKPFKVKPGHYEYMFQFNKLPSKPMCLKNHTKKTICFVSKSQSTMPPSFNTQWRELNKIDNLDLYFYSFGKIIYVVEVEIEMGRPRTWFKPFDKMLREPKIIEFIPEPKKFASNETVTRSGRNNHGVIDYISKNNSSKSLSAMQESEDGVTAIAPNGPDEKFLARNLDQLDINNDLEYEIEETEENPMKRYKCRYPLGLPDGASMMWVEVRSRDIDTIYRQDFLFRQGSGNFDNVYLIVKGNLSFSDFSNISVKPTRLQLNLLETVSYLSQGIGNENFSSLKLMEIDNLSKSDRPLFDTNELKFISSKNHEIMECEIKLKDNPILKRLQFNEEDYKHRGNRLYSFKTCVITRLFSYQLLIDWNINGQTRQTETIIPVQVFAHKRPPPVNEALPRYVEPPSYDDHV.

This sequence belongs to the ART10 family.

The protein resides in the cytoplasm. In terms of biological role, may regulate endocytosis by recruiting RSP5 ubiquitin ligase activity to specific plasma membrane proteins in response to extracellular stimuli. This is Arrestin-related trafficking adapter 10 (ART10) from Candida glabrata (strain ATCC 2001 / BCRC 20586 / JCM 3761 / NBRC 0622 / NRRL Y-65 / CBS 138) (Yeast).